Reading from the N-terminus, the 306-residue chain is Pentalenolactone F synthase (306 aa).

Fe cation is bound by residues H110 and D112. 2 residues coordinate 2-oxoglutarate: T138 and W258. H273 lines the Fe cation pocket. Residue R284 coordinates 2-oxoglutarate.

This sequence belongs to the TfdA dioxygenase family. Fe(2+) serves as cofactor.

The catalysed reaction is pentalenolactone D + 2 2-oxoglutarate + 2 O2 = pentalenolactone F + 2 succinate + 2 CO2 + H2O. It participates in antibiotic biosynthesis; neopentalenolactone biosynthesis. With respect to regulation, activated by ascorbate. In terms of biological role, catalyzes the Fe(2+) and alpha-ketoglutarate-dependent oxidation of pentalenolactone D to pentalenolactone F. Also able to catalyze the oxidation of pentalenolactone D to pentalenolactone E. In presence of neopentalenolactone D, mediates production of PL308 and possibly neopentalenolactone E. The chain is Pentalenolactone F synthase (ptlD) from Streptomyces avermitilis (strain ATCC 31267 / DSM 46492 / JCM 5070 / NBRC 14893 / NCIMB 12804 / NRRL 8165 / MA-4680).